Reading from the N-terminus, the 370-residue chain is Protein commissureless 1 (370 aa).

At 1–136 (MISTTDYPTV…DADMHVIINY (136 aa)) the chain is on the extracellular side. Residues 108 to 131 (LRDRSEESGESSWWSQIFGDADMH) form a required for vesicular localization region. A helical transmembrane segment spans residues 137–157 (LWIGVVSSLVILSLVFILFSC). At 158-370 (YFYRKFRTWK…CASLVVVVAA (213 aa)) the chain is on the cytoplasmic side. 2 short sequence motifs (PY-motif) span residues 220-223 (PPCY) and 229-232 (LPSY). The tract at residues 227–237 (TGLPSYDEALH) is interaction with Nedd4. A disordered region spans residues 287–312 (VEEDKADSSSSTSASASPSSSESSNL). Low complexity predominate over residues 294–312 (SSSSTSASASPSSSESSNL).

It belongs to the commissureless family. Interacts (probably via PY-motifs) with Nedd4 (via WW2 domain). Interacts with Robo. Ubiquitinated by Nedd4; which promotes endocytosis of the comm/robo complex and comm proteasomal degradation. Not ubiquitinated by Nedd4.

The protein resides in the cytoplasmic vesicle membrane. The protein localises to the cell membrane. Its function is as follows. Controls axon guidance across the CNS midline by preventing the delivery of Robo to the growth cone. The chain is Protein commissureless 1 from Drosophila melanogaster (Fruit fly).